A 60-amino-acid chain; its full sequence is Large ribosomal subunit protein bL32 (60 aa).

The disordered stretch occupies residues 1–21 (MAVQQNKKSPSKRGMHRAHNA). Residues 9 to 19 (SPSKRGMHRAH) are compositionally biased toward basic residues.

It belongs to the bacterial ribosomal protein bL32 family.

The chain is Large ribosomal subunit protein bL32 from Albidiferax ferrireducens (strain ATCC BAA-621 / DSM 15236 / T118) (Rhodoferax ferrireducens).